The chain runs to 471 residues: Cytolysin (471 aa).

The N-terminal stretch at 1–20 (MKKMTLFTLSLLATAVQVGA) is a signal peptide. The Ricin B-type lectin domain maps to 338–465 (AHVTLQSLSN…EANQARWKPT (128 aa)).

This sequence belongs to the HlyA hemolysin family.

Functionally, bacterial hemolysins are exotoxins that attack blood cell membranes and cause cell rupture by mechanisms not clearly defined. In Vibrio vulnificus (strain CMCP6), this protein is Cytolysin (vvhA).